Here is a 194-residue protein sequence, read N- to C-terminus: uncharacterized protein (194 aa).

A signal peptide spans 1-15; it reads MFVLSIALLSCTTLC. Residues 49-134 form the PAN domain; sequence CPQGLHADAI…KATYYEKIRC (86 aa). Intrachain disulfides connect Cys-49/Cys-134 and Cys-79/Cys-106.

This is an uncharacterized protein from Caenorhabditis elegans.